Consider the following 271-residue polypeptide: 3-methyl-2-oxobutanoate hydroxymethyltransferase (271 aa).

Mg(2+)-binding residues include aspartate 51 and aspartate 90. 3-methyl-2-oxobutanoate contacts are provided by residues 51–52, aspartate 90, and lysine 118; that span reads DS. A Mg(2+)-binding site is contributed by glutamate 120. The active-site Proton acceptor is glutamate 186.

It belongs to the PanB family. In terms of assembly, homodecamer; pentamer of dimers. It depends on Mg(2+) as a cofactor.

The protein localises to the cytoplasm. The enzyme catalyses 3-methyl-2-oxobutanoate + (6R)-5,10-methylene-5,6,7,8-tetrahydrofolate + H2O = 2-dehydropantoate + (6S)-5,6,7,8-tetrahydrofolate. It functions in the pathway cofactor biosynthesis; (R)-pantothenate biosynthesis; (R)-pantoate from 3-methyl-2-oxobutanoate: step 1/2. Functionally, catalyzes the reversible reaction in which hydroxymethyl group from 5,10-methylenetetrahydrofolate is transferred onto alpha-ketoisovalerate to form ketopantoate. This Xanthomonas axonopodis pv. citri (strain 306) protein is 3-methyl-2-oxobutanoate hydroxymethyltransferase.